We begin with the raw amino-acid sequence, 474 residues long: Ribulose bisphosphate carboxylase large chain (474 aa).

Asparagine 123 and threonine 173 together coordinate substrate. Lysine 175 (proton acceptor) is an active-site residue. Lysine 177 provides a ligand contact to substrate. Lysine 201, aspartate 203, and glutamate 204 together coordinate Mg(2+). Lysine 201 carries the post-translational modification N6-carboxylysine. Residue histidine 293 is the Proton acceptor of the active site. Residues arginine 294, histidine 326, and serine 378 each contribute to the substrate site.

Belongs to the RuBisCO large chain family. Type I subfamily. As to quaternary structure, heterohexadecamer of 8 large chains and 8 small chains; disulfide-linked. The disulfide link is formed within the large subunit homodimers. The cofactor is Mg(2+). The disulfide bond which can form in the large chain dimeric partners within the hexadecamer appears to be associated with oxidative stress and protein turnover.

The protein resides in the carboxysome. The catalysed reaction is 2 (2R)-3-phosphoglycerate + 2 H(+) = D-ribulose 1,5-bisphosphate + CO2 + H2O. It carries out the reaction D-ribulose 1,5-bisphosphate + O2 = 2-phosphoglycolate + (2R)-3-phosphoglycerate + 2 H(+). In terms of biological role, ruBisCO catalyzes two reactions: the carboxylation of D-ribulose 1,5-bisphosphate, the primary event in carbon dioxide fixation, as well as the oxidative fragmentation of the pentose substrate in the photorespiration process. Both reactions occur simultaneously and in competition at the same active site. This is Ribulose bisphosphate carboxylase large chain from Synechococcus sp.